A 160-amino-acid chain; its full sequence is SsrA-binding protein (160 aa).

The disordered stretch occupies residues 135 to 160; it reads KTHDKRETIKERDWKREQSRILRDRG. Over residues 138-160 the composition is skewed to basic and acidic residues; the sequence is DKRETIKERDWKREQSRILRDRG.

It belongs to the SmpB family.

The protein resides in the cytoplasm. In terms of biological role, required for rescue of stalled ribosomes mediated by trans-translation. Binds to transfer-messenger RNA (tmRNA), required for stable association of tmRNA with ribosomes. tmRNA and SmpB together mimic tRNA shape, replacing the anticodon stem-loop with SmpB. tmRNA is encoded by the ssrA gene; the 2 termini fold to resemble tRNA(Ala) and it encodes a 'tag peptide', a short internal open reading frame. During trans-translation Ala-aminoacylated tmRNA acts like a tRNA, entering the A-site of stalled ribosomes, displacing the stalled mRNA. The ribosome then switches to translate the ORF on the tmRNA; the nascent peptide is terminated with the 'tag peptide' encoded by the tmRNA and targeted for degradation. The ribosome is freed to recommence translation, which seems to be the essential function of trans-translation. The polypeptide is SsrA-binding protein (Sphingomonas elodea).